Here is a 435-residue protein sequence, read N- to C-terminus: Probable exopolygalacturonase B (435 aa).

Positions 1-15 are cleaved as a signal peptide; the sequence is MKFFLATLFASAVSS. Asn59, Asn184, and Asn224 each carry an N-linked (GlcNAc...) asparagine glycan. PbH1 repeat units follow at residues 208-239, 240-261, 262-283, 294-315, and 326-347; these read SKDV…DSLN, VDGL…SPKP, NTTN…SMGS, IEHA…RLKA, and INNI…VLDQ. The active-site Proton donor is Asp254. An intrachain disulfide couples Cys256 to Cys273. N-linked (GlcNAc...) asparagine glycosylation is found at Asn262 and Asn274. His277 is an active-site residue. 4 N-linked (GlcNAc...) asparagine glycosylation sites follow: Asn301, Asn328, Asn365, and Asn373. The PbH1 6 repeat unit spans residues 366–388; sequence VTNILFENISGTSSGKNGKVVAD. A disulfide bridge links Cys391 with Cys397. N-linked (GlcNAc...) asparagine glycosylation is present at Asn406.

Belongs to the glycosyl hydrolase 28 family.

The protein resides in the secreted. The enzyme catalyses [(1-&gt;4)-alpha-D-galacturonosyl](n) + H2O = alpha-D-galacturonate + [(1-&gt;4)-alpha-D-galacturonosyl](n-1). Its function is as follows. Specific in hydrolyzing the terminal glycosidic bond of polygalacturonic acid and oligogalacturonates. The sequence is that of Probable exopolygalacturonase B (pgxB) from Aspergillus flavus (strain ATCC 200026 / FGSC A1120 / IAM 13836 / NRRL 3357 / JCM 12722 / SRRC 167).